Consider the following 441-residue polypeptide: Membrane protein PB1A10.07c (441 aa).

Transmembrane regions (helical) follow at residues 1-21, 41-61, 97-117, 128-148, 158-178, 206-226, 235-255, 263-283, 307-327, 364-384, and 415-435; these read MGAV…VVGI, VGAV…SWCM, LSFT…LCNT, GLWP…FFIP, IISV…LVDF, TVGM…FFCA, INTI…HPTI, GLAQ…SALA, VIGA…AASS, YNFI…ASLL, and IITS…PVFF.

The protein belongs to the TDE1 family.

Its subcellular location is the membrane. This Schizosaccharomyces pombe (strain 972 / ATCC 24843) (Fission yeast) protein is Membrane protein PB1A10.07c.